The following is a 295-amino-acid chain: 33 kDa chaperonin (295 aa).

Intrachain disulfides connect Cys236–Cys238 and Cys269–Cys272.

It belongs to the HSP33 family. Under oxidizing conditions two disulfide bonds are formed involving the reactive cysteines. Under reducing conditions zinc is bound to the reactive cysteines and the protein is inactive.

It is found in the cytoplasm. Functionally, redox regulated molecular chaperone. Protects both thermally unfolding and oxidatively damaged proteins from irreversible aggregation. Plays an important role in the bacterial defense system toward oxidative stress. The polypeptide is 33 kDa chaperonin (Citrifermentans bemidjiense (strain ATCC BAA-1014 / DSM 16622 / JCM 12645 / Bem) (Geobacter bemidjiensis)).